The chain runs to 208 residues: Protein-L-isoaspartate O-methyltransferase (208 aa).

Ser-59 is an active-site residue.

Belongs to the methyltransferase superfamily. L-isoaspartyl/D-aspartyl protein methyltransferase family.

It is found in the cytoplasm. It catalyses the reaction [protein]-L-isoaspartate + S-adenosyl-L-methionine = [protein]-L-isoaspartate alpha-methyl ester + S-adenosyl-L-homocysteine. Catalyzes the methyl esterification of L-isoaspartyl residues in peptides and proteins that result from spontaneous decomposition of normal L-aspartyl and L-asparaginyl residues. It plays a role in the repair and/or degradation of damaged proteins. The protein is Protein-L-isoaspartate O-methyltransferase of Erwinia tasmaniensis (strain DSM 17950 / CFBP 7177 / CIP 109463 / NCPPB 4357 / Et1/99).